The sequence spans 397 residues: Glia-derived nexin (397 aa).

A signal peptide spans 1 to 19 (MNWHFPFFILTTVTLSSVY). N-linked (GlcNAc...) asparagine glycosylation occurs at Asn159.

It belongs to the serpin family.

Its subcellular location is the secreted. It is found in the extracellular space. Its function is as follows. Serine protease inhibitor with activity toward thrombin, trypsin, and urokinase. Promotes neurite extension by inhibiting thrombin. Binds heparin. The chain is Glia-derived nexin (Serpine2) from Rattus norvegicus (Rat).